The primary structure comprises 373 residues: UBX domain-containing protein 1 (373 aa).

Disordered regions lie at residues Val-39–Arg-179 and Ile-236–Ser-293. The span at Thr-49 to Pro-59 shows a compositional bias: polar residues. Low complexity-rich tracts occupy residues Ser-60 to Ser-71 and Leu-85 to Asp-94. Positions Ser-95–Gln-104 are enriched in acidic residues. Residues Asp-121–Arg-132 are compositionally biased toward basic and acidic residues. Residues Leu-185–Gln-258 enclose the SEP domain. A UBX domain is found at Glu-292 to Val-369.

Functionally, involved in CDC48-dependent protein degradation through the ubiquitin/proteasome pathway. The chain is UBX domain-containing protein 1 (ubx1) from Emericella nidulans (strain FGSC A4 / ATCC 38163 / CBS 112.46 / NRRL 194 / M139) (Aspergillus nidulans).